The sequence spans 382 residues: uncharacterized protein (382 aa).

Helical transmembrane passes span 14-34 (GLLL…LWLA), 45-65 (VVSS…GYVI), 79-99 (FIFA…SWLA), 102-122 (FVAG…LMCS), 131-151 (LLAA…LLVS), 157-177 (LMSV…PLLF), 204-224 (LGVN…GLMP), 235-255 (ASIG…QWPI), 270-290 (VQVF…AMAP), 291-311 (ALFI…AWAC), 325-345 (ALLL…AMLM), and 348-368 (FSDN…LLML).

The protein belongs to the major facilitator superfamily. YcaD (TC 2.A.1.26) family.

The protein resides in the cell inner membrane. This is an uncharacterized protein from Shigella dysenteriae serotype 1 (strain Sd197).